A 290-amino-acid chain; its full sequence is Translin-associated protein X (290 aa).

Residues 1-32 form a disordered region; sequence MSNKEGSGGFRKRKHDNFPHNQRREGKDVNSS. Basic and acidic residues predominate over residues 16-28; the sequence is DNFPHNQRREGKD. Positions 73–208 are interaction with C1D; sequence LLHRITSAPD…MRMCINSVGN (136 aa). Mg(2+) contacts are provided by Glu-129 and Glu-197. Lys-279 participates in a covalent cross-link: Glycyl lysine isopeptide (Lys-Gly) (interchain with G-Cter in SUMO2).

The protein belongs to the translin family. Ring-shaped heterooctamer of six TSN and two TSNAX subunits. Interacts with GOLGA3, TSNAXIP1, SUN1 and AKAP9. Interacts with the homodimeric form of C1D following gamma-radiation. Interacts with TSN and C1D in a mutually exclusive manner. Sumoylated with SUMO1.

The protein localises to the cytoplasm. It is found in the perinuclear region. Its subcellular location is the golgi apparatus. The protein resides in the nucleus. Functionally, acts in combination with TSN as an endonuclease involved in the activation of the RNA-induced silencing complex (RISC). Possible role in spermatogenesis. The sequence is that of Translin-associated protein X (TSNAX) from Pongo abelii (Sumatran orangutan).